We begin with the raw amino-acid sequence, 61 residues long: Large ribosomal subunit protein uL30 (61 aa).

It belongs to the universal ribosomal protein uL30 family. As to quaternary structure, part of the 50S ribosomal subunit.

The polypeptide is Large ribosomal subunit protein uL30 (Petrotoga mobilis (strain DSM 10674 / SJ95)).